The primary structure comprises 379 residues: Cytochrome b (379 aa).

4 consecutive transmembrane segments (helical) span residues 33–53 (FGSL…FLAM), 77–98 (WLIR…FIHV), 113–133 (WNIG…GYVL), and 178–198 (FFAF…VHLL). 2 residues coordinate heme b: H83 and H97. The heme b site is built by H182 and H196. Residue H201 coordinates a ubiquinone. 4 helical membrane passes run 226–246 (TKDL…ALFF), 288–308 (LGGV…PLLN), 320–340 (VTQV…WIGG), and 347–367 (FTTI…ILIP).

It belongs to the cytochrome b family. As to quaternary structure, the cytochrome bc1 complex contains 11 subunits: 3 respiratory subunits (MT-CYB, CYC1 and UQCRFS1), 2 core proteins (UQCRC1 and UQCRC2) and 6 low-molecular weight proteins (UQCRH/QCR6, UQCRB/QCR7, UQCRQ/QCR8, UQCR10/QCR9, UQCR11/QCR10 and a cleavage product of UQCRFS1). This cytochrome bc1 complex then forms a dimer. It depends on heme b as a cofactor.

It localises to the mitochondrion inner membrane. Component of the ubiquinol-cytochrome c reductase complex (complex III or cytochrome b-c1 complex) that is part of the mitochondrial respiratory chain. The b-c1 complex mediates electron transfer from ubiquinol to cytochrome c. Contributes to the generation of a proton gradient across the mitochondrial membrane that is then used for ATP synthesis. This chain is Cytochrome b (MT-CYB), found in Akodon paranaensis (Parana grass mouse).